Consider the following 172-residue polypeptide: 3-hydroxydecanoyl-[acyl-carrier-protein] dehydratase (172 aa).

Residue His71 is part of the active site.

It belongs to the thioester dehydratase family. FabA subfamily. As to quaternary structure, homodimer.

The protein localises to the cytoplasm. The catalysed reaction is a (3R)-hydroxyacyl-[ACP] = a (2E)-enoyl-[ACP] + H2O. It carries out the reaction (3R)-hydroxydecanoyl-[ACP] = (2E)-decenoyl-[ACP] + H2O. The enzyme catalyses (2E)-decenoyl-[ACP] = (3Z)-decenoyl-[ACP]. Its pathway is lipid metabolism; fatty acid biosynthesis. In terms of biological role, necessary for the introduction of cis unsaturation into fatty acids. Catalyzes the dehydration of (3R)-3-hydroxydecanoyl-ACP to E-(2)-decenoyl-ACP and then its isomerization to Z-(3)-decenoyl-ACP. Can catalyze the dehydratase reaction for beta-hydroxyacyl-ACPs with saturated chain lengths up to 16:0, being most active on intermediate chain length. This Vibrio parahaemolyticus serotype O3:K6 (strain RIMD 2210633) protein is 3-hydroxydecanoyl-[acyl-carrier-protein] dehydratase.